Here is a 292-residue protein sequence, read N- to C-terminus: Nucleotide-binding protein azo0399 (292 aa).

Residue 8 to 15 participates in ATP binding; sequence GLSGSGKS. 57–60 provides a ligand contact to GTP; it reads DMRS.

It belongs to the RapZ-like family.

In terms of biological role, displays ATPase and GTPase activities. The sequence is that of Nucleotide-binding protein azo0399 from Azoarcus sp. (strain BH72).